Here is a 138-residue protein sequence, read N- to C-terminus: ATP synthase epsilon chain (138 aa).

It belongs to the ATPase epsilon chain family. F-type ATPases have 2 components, CF(1) - the catalytic core - and CF(0) - the membrane proton channel. CF(1) has five subunits: alpha(3), beta(3), gamma(1), delta(1), epsilon(1). CF(0) has three main subunits: a, b and c.

The protein localises to the cell inner membrane. Its function is as follows. Produces ATP from ADP in the presence of a proton gradient across the membrane. The sequence is that of ATP synthase epsilon chain from Wigglesworthia glossinidia brevipalpis.